We begin with the raw amino-acid sequence, 299 residues long: ATP phosphoribosyltransferase (299 aa).

The protein belongs to the ATP phosphoribosyltransferase family. Long subfamily. It depends on Mg(2+) as a cofactor.

It localises to the cytoplasm. It carries out the reaction 1-(5-phospho-beta-D-ribosyl)-ATP + diphosphate = 5-phospho-alpha-D-ribose 1-diphosphate + ATP. It functions in the pathway amino-acid biosynthesis; L-histidine biosynthesis; L-histidine from 5-phospho-alpha-D-ribose 1-diphosphate: step 1/9. Feedback inhibited by histidine. Its function is as follows. Catalyzes the condensation of ATP and 5-phosphoribose 1-diphosphate to form N'-(5'-phosphoribosyl)-ATP (PR-ATP). Has a crucial role in the pathway because the rate of histidine biosynthesis seems to be controlled primarily by regulation of HisG enzymatic activity. The polypeptide is ATP phosphoribosyltransferase (Shewanella oneidensis (strain ATCC 700550 / JCM 31522 / CIP 106686 / LMG 19005 / NCIMB 14063 / MR-1)).